The following is a 54-amino-acid chain: Secreted virulence factor MC69 (54 aa).

An N-terminal signal peptide occupies residues 1 to 16 (MKAAFVLALCASLASA). A disulfide bridge links C36 with C46.

The protein belongs to the MC69 virulence factor family.

Its subcellular location is the secreted. Functionally, secreted protein required for appressorial penetration of intact host epidermal cells and for pathogenicity. This is Secreted virulence factor MC69 from Pyricularia oryzae (strain 70-15 / ATCC MYA-4617 / FGSC 8958) (Rice blast fungus).